A 342-amino-acid polypeptide reads, in one-letter code: Aristolochene synthase (342 aa).

Asp115, Asn244, Ser248, and Glu252 together coordinate Mg(2+). The (2E,6E)-farnesyl diphosphate site is built by Arg340 and Tyr341.

The protein belongs to the terpene synthase family. Homodimer. Mg(2+) is required as a cofactor.

The catalysed reaction is (2E,6E)-farnesyl diphosphate = (+)-aristolochene + diphosphate. Its pathway is sesquiterpene biosynthesis; aristolochene biosynthesis; aristolochene from farnesyl diphosphate: step 1/1. In terms of biological role, aristolochene synthase; part of the gene cluster that mediates the biosynthesis of PR-toxin, a bicyclic sesquiterpene belonging to the eremophilane class and acting as a mycotoxin. The first step of the pathway is catalyzed by the aristolochene synthase which performs the cyclization of trans,trans-farnesyl diphosphate (FPP) to the bicyclic sesquiterpene aristolochene. Following the formation of aristolochene, the non-oxygenated aristolochene is converted to the trioxygenated intermediate eremofortin B, via 7-epi-neopetasone. This conversion appears to involve three enzymes, a hydroxysterol oxidase-like enzyme, the quinone-oxidase prx3 that forms the quinone-type-structure in the bicyclic nucleus of aristolochene with the C8-oxo group and the C-3 hydroxyl group, and the P450 monooxygenase ORF6 that introduces the epoxide at the double bond between carbons 1 and 2. No monoxy or dioxy-intermediates have been reported to be released to the broth, so these three early oxidative reactions may be coupled together. Eremofortin B is further oxidized by another P450 monooxygenase, that introduces a second epoxide between carbons 7 and 11 prior to acetylation to eremofortin A by the acetyltransferase ORF8. The second epoxidation may be performed by a second P450 monooxygenase. After the acetylation step, eremofortin A is converted to eremofortin C and then to PR-toxin. First the conversion of eremofortin A to eremofortin C proceeds by oxidation of the side chain of the molecule at C-12 and is catalyzed by the short-chain oxidoreductase prx1. The cytochrome P450 monooxygenase ORF5 also plays a role in this step. The primary alcohol formed at C-12 is finally oxidized by the short-chain alcohol dehydrogenase prx4 that forms PR-toxin. This Penicillium roqueforti (strain FM164) protein is Aristolochene synthase.